The chain runs to 168 residues: Ribonuclease H (168 aa).

In terms of domain architecture, RNase H type-1 spans 10 to 151; sequence NNIPVKIYTD…ADKLATNGKI (142 aa). Mg(2+) is bound by residues Asp-19, Glu-57, Asp-79, and Asp-143.

Belongs to the RNase H family. As to quaternary structure, monomer. Mg(2+) serves as cofactor.

Its subcellular location is the cytoplasm. It carries out the reaction Endonucleolytic cleavage to 5'-phosphomonoester.. Endonuclease that specifically degrades the RNA of RNA-DNA hybrids. The protein is Ribonuclease H of Orientia tsutsugamushi (strain Boryong) (Rickettsia tsutsugamushi).